Reading from the N-terminus, the 324-residue chain is Signal peptidase I (324 aa).

Met-1 is subject to Blocked amino end (Met). The Periplasmic segment spans residues 1–3; the sequence is MAN. Residues 4–22 traverse the membrane as a helical segment; the sequence is MFALILVIATLVTGILWCV. Residues 23 to 58 lie on the Cytoplasmic side of the membrane; the sequence is DKFFFAPKRRERQAAAQAAAGDSLDKATLKKVAPKP. A helical membrane pass occupies residues 59-77; that stretch reads GWLETGASVFPVLAIVLIV. At 78–324 the chain is on the periplasmic side; the sequence is RSFIYEPFQI…LRLSRIGGIH (247 aa). Catalysis depends on residues Ser-91 and Lys-146. The cysteines at positions 171 and 177 are disulfide-linked.

Belongs to the peptidase S26 family.

It is found in the cell inner membrane. It carries out the reaction Cleavage of hydrophobic, N-terminal signal or leader sequences from secreted and periplasmic proteins.. This is Signal peptidase I (lepB) from Escherichia coli (strain K12).